The following is a 366-amino-acid chain: tRNA/tmRNA (uracil-C(5))-methyltransferase (366 aa).

5 residues coordinate S-adenosyl-L-methionine: Gln-190, Tyr-218, Asn-223, Glu-239, and Asp-299. Cys-324 serves as the catalytic Nucleophile. Glu-358 serves as the catalytic Proton acceptor.

The protein belongs to the class I-like SAM-binding methyltransferase superfamily. RNA M5U methyltransferase family. TrmA subfamily.

The catalysed reaction is uridine(54) in tRNA + S-adenosyl-L-methionine = 5-methyluridine(54) in tRNA + S-adenosyl-L-homocysteine + H(+). It carries out the reaction uridine(341) in tmRNA + S-adenosyl-L-methionine = 5-methyluridine(341) in tmRNA + S-adenosyl-L-homocysteine + H(+). In terms of biological role, dual-specificity methyltransferase that catalyzes the formation of 5-methyluridine at position 54 (m5U54) in all tRNAs, and that of position 341 (m5U341) in tmRNA (transfer-mRNA). The chain is tRNA/tmRNA (uracil-C(5))-methyltransferase from Salmonella agona (strain SL483).